A 160-amino-acid polypeptide reads, in one-letter code: 2-C-methyl-D-erythritol 2,4-cyclodiphosphate synthase (160 aa).

Residues D11 and H13 each contribute to the a divalent metal cation site. 4-CDP-2-C-methyl-D-erythritol 2-phosphate is bound by residues 11 to 13 and 37 to 38; these read DVH and HS. Residue H45 participates in a divalent metal cation binding. Residues 59–61 and R145 each bind 4-CDP-2-C-methyl-D-erythritol 2-phosphate; that span reads DIG.

Belongs to the IspF family. Homotrimer. The cofactor is a divalent metal cation.

The catalysed reaction is 4-CDP-2-C-methyl-D-erythritol 2-phosphate = 2-C-methyl-D-erythritol 2,4-cyclic diphosphate + CMP. Its pathway is isoprenoid biosynthesis; isopentenyl diphosphate biosynthesis via DXP pathway; isopentenyl diphosphate from 1-deoxy-D-xylulose 5-phosphate: step 4/6. Its function is as follows. Involved in the biosynthesis of isopentenyl diphosphate (IPP) and dimethylallyl diphosphate (DMAPP), two major building blocks of isoprenoid compounds. Catalyzes the conversion of 4-diphosphocytidyl-2-C-methyl-D-erythritol 2-phosphate (CDP-ME2P) to 2-C-methyl-D-erythritol 2,4-cyclodiphosphate (ME-CPP) with a corresponding release of cytidine 5-monophosphate (CMP). This chain is 2-C-methyl-D-erythritol 2,4-cyclodiphosphate synthase, found in Neisseria gonorrhoeae (strain ATCC 700825 / FA 1090).